Reading from the N-terminus, the 81-residue chain is Toxin-like peptide AaF1CA5 (81 aa).

The signal sequence occupies residues 1–22; sequence MMKLMLFSIIVILFSLIGSIHG. Residues 25 to 81 enclose the LCN-type CS-alpha/beta domain; sequence VPGNYPLDSSDDTYLCAPLGENPFCIKICRKHGVKYGLMLRLPCWCEYFGKIKNVKI. Intrachain disulfides connect Cys-49-Cys-68 and Cys-53-Cys-70.

The protein belongs to the long (3 C-C) scorpion toxin superfamily. In terms of tissue distribution, expressed by the venom gland.

The protein localises to the secreted. Its function is as follows. Probable neurotoxin that inhibits ion channels. The chain is Toxin-like peptide AaF1CA5 from Androctonus australis (Sahara scorpion).